A 405-amino-acid chain; its full sequence is Probable tRNA sulfurtransferase (405 aa).

One can recognise a THUMP domain in the interval 60-165 (EGVIERLRHV…QDAIYLTNQV (106 aa)). ATP contacts are provided by residues 183 to 184 (ML), 208 to 209 (HF), arginine 265, glycine 287, and glutamine 296.

The protein belongs to the ThiI family.

Its subcellular location is the cytoplasm. The enzyme catalyses [ThiI sulfur-carrier protein]-S-sulfanyl-L-cysteine + a uridine in tRNA + 2 reduced [2Fe-2S]-[ferredoxin] + ATP + H(+) = [ThiI sulfur-carrier protein]-L-cysteine + a 4-thiouridine in tRNA + 2 oxidized [2Fe-2S]-[ferredoxin] + AMP + diphosphate. It catalyses the reaction [ThiS sulfur-carrier protein]-C-terminal Gly-Gly-AMP + S-sulfanyl-L-cysteinyl-[cysteine desulfurase] + AH2 = [ThiS sulfur-carrier protein]-C-terminal-Gly-aminoethanethioate + L-cysteinyl-[cysteine desulfurase] + A + AMP + 2 H(+). It participates in cofactor biosynthesis; thiamine diphosphate biosynthesis. Its function is as follows. Catalyzes the ATP-dependent transfer of a sulfur to tRNA to produce 4-thiouridine in position 8 of tRNAs, which functions as a near-UV photosensor. Also catalyzes the transfer of sulfur to the sulfur carrier protein ThiS, forming ThiS-thiocarboxylate. This is a step in the synthesis of thiazole, in the thiamine biosynthesis pathway. The sulfur is donated as persulfide by IscS. In Latilactobacillus sakei subsp. sakei (strain 23K) (Lactobacillus sakei subsp. sakei), this protein is Probable tRNA sulfurtransferase.